A 520-amino-acid chain; its full sequence is MTQFDHDRLLIIDFGSQVTQLIARRLRELNVFCEIHPFQNVTDAFLADFAPKAVIFSGGPASVIDANSPRPPASVFELGVPILGICYGQQVMMQMLGGMVERGHGTAEFGRAYVTPQGDRPELLNGWFLDGREQVWMSHGDHVSRIAPGFEVYGTSPNAPFAITADLARNFFAVQFHPEVHHTPNGKTLYENFVRLAGFTGDWTMDAYREQAIAEIRAQVGDGKVICALSGGVDSSVAAVLIHEAIGEQLTCVFVDHGLLRKNEAQEVVTMFREHYNLPLIHADETELFLSALDGQSDPETKRKIIGKLFIDVFEAKAKEIGGADFLAQGTLYPDVIESVSFSGGPSVTIKSHHNVGGLPEKMGMKLVEPLRELFKDEVRALGHELGLPASFIGRHPFPGPGLAIRCPGEITRPKLEILREADAVYIDQIRKYGLYDEIWQAYVAILPVRTVGVMGDGRTYDYACALRAVTSVDGMTADYYPFTHEFLGETATRIINEVQGINRVTYDITSKPPGTIEWE.

Positions 8–202 constitute a Glutamine amidotransferase type-1 domain; sequence RLLIIDFGSQ…FVRLAGFTGD (195 aa). The active-site Nucleophile is the Cys86. Residues His177 and Glu179 contribute to the active site. Positions 203–395 constitute a GMPS ATP-PPase domain; that stretch reads WTMDAYREQA…LGLPASFIGR (193 aa). 230–236 is an ATP binding site; the sequence is SGGVDSS.

As to quaternary structure, homodimer.

It catalyses the reaction XMP + L-glutamine + ATP + H2O = GMP + L-glutamate + AMP + diphosphate + 2 H(+). It functions in the pathway purine metabolism; GMP biosynthesis; GMP from XMP (L-Gln route): step 1/1. Functionally, catalyzes the synthesis of GMP from XMP. The protein is GMP synthase [glutamine-hydrolyzing] of Dinoroseobacter shibae (strain DSM 16493 / NCIMB 14021 / DFL 12).